The chain runs to 289 residues: Kinetochore-associated protein MTW1 (289 aa).

Positions R105–R147 form a coiled coil.

The protein belongs to the mis12 family. As to quaternary structure, component of the MIND kinetochore complex, which is composed of at least MTW1, NNF1, NSL1 and DSN1.

It localises to the chromosome. The protein resides in the centromere. Its subcellular location is the kinetochore. It is found in the cytoplasm. The protein localises to the cytoskeleton. It localises to the spindle pole. In terms of biological role, acts as an essential component of the kinetochore MIND complex, which is required for the spindle checkpoint and kinetochore integrity. MIND plays a role in establishing a bipolar spindle-kinetochore interaction by joining kinetochore subunits contacting DNA to those contacting microtubules. This Saccharomyces cerevisiae (strain ATCC 204508 / S288c) (Baker's yeast) protein is Kinetochore-associated protein MTW1 (MTW1).